The primary structure comprises 260 residues: Proteasome subunit alpha (260 aa).

Belongs to the peptidase T1A family. In terms of assembly, the 20S proteasome core is composed of 14 alpha and 14 beta subunits that assemble into four stacked heptameric rings, resulting in a barrel-shaped structure. The two inner rings, each composed of seven catalytic beta subunits, are sandwiched by two outer rings, each composed of seven alpha subunits. The catalytic chamber with the active sites is on the inside of the barrel. Has a gated structure, the ends of the cylinder being occluded by the N-termini of the alpha-subunits. Is capped at one or both ends by the proteasome regulatory ATPase, PAN.

It localises to the cytoplasm. The formation of the proteasomal ATPase PAN-20S proteasome complex, via the docking of the C-termini of PAN into the intersubunit pockets in the alpha-rings, triggers opening of the gate for substrate entry. Interconversion between the open-gate and close-gate conformations leads to a dynamic regulation of the 20S proteasome proteolysis activity. Functionally, component of the proteasome core, a large protease complex with broad specificity involved in protein degradation. The chain is Proteasome subunit alpha from Thermococcus onnurineus (strain NA1).